Consider the following 117-residue polypeptide: MFSIIIIASVILLITTVVMFLASILSKKALIDREKSSPFECGFDPKSSSRLPFSLRFFLITIIFLIFDVEIALILPMIIILKYSNIMIWTITSIIFILILLIGLYHEWNQGMLNWSN.

The next 3 membrane-spanning stretches (helical) occupy residues 4–24 (IIIIASVILLITTVVMFLASI), 60–80 (ITIIFLIFDVEIALILPMIII), and 86–106 (IMIWTITSIIFILILLIGLYH).

This sequence belongs to the complex I subunit 3 family.

The protein localises to the mitochondrion membrane. The catalysed reaction is a ubiquinone + NADH + 5 H(+)(in) = a ubiquinol + NAD(+) + 4 H(+)(out). In terms of biological role, core subunit of the mitochondrial membrane respiratory chain NADH dehydrogenase (Complex I) that is believed to belong to the minimal assembly required for catalysis. Complex I functions in the transfer of electrons from NADH to the respiratory chain. The immediate electron acceptor for the enzyme is believed to be ubiquinone. The protein is NADH-ubiquinone oxidoreductase chain 3 (mt:ND3) of Drosophila yakuba (Fruit fly).